The following is a 394-amino-acid chain: Isopentenyl-diphosphate delta-isomerase (394 aa).

10–11 (RK) contacts substrate. Residues T67, 68–70 (GMT), S101, and N129 each bind FMN. 101-103 (SQR) contributes to the substrate binding site. Q168 lines the substrate pocket. E169 contacts Mg(2+). FMN contacts are provided by residues K200, S225, T230, 279–281 (GMR), and 300–301 (AL).

It belongs to the IPP isomerase type 2 family. In terms of assembly, homooctamer. Dimer of tetramers. FMN is required as a cofactor. Requires NADPH as cofactor. The cofactor is Mg(2+).

Its subcellular location is the cytoplasm. It carries out the reaction isopentenyl diphosphate = dimethylallyl diphosphate. Involved in the biosynthesis of isoprenoids. Catalyzes the 1,3-allylic rearrangement of the homoallylic substrate isopentenyl (IPP) to its allylic isomer, dimethylallyl diphosphate (DMAPP). This Pyrococcus furiosus (strain ATCC 43587 / DSM 3638 / JCM 8422 / Vc1) protein is Isopentenyl-diphosphate delta-isomerase.